Reading from the N-terminus, the 603-residue chain is Extracellular basic protease (603 aa).

Positions 1-21 are cleaved as a signal peptide; it reads MNLSNISAVKVLTLVVSAAIA. Residues 22 to 132 constitute a propeptide that is removed on maturation; that stretch reads GQVCAAESIV…VEVDRLAYPK (111 aa). The region spanning 143 to 468 is the Peptidase S8 domain; it reads QWHYFGNYGV…SGIVDANAAV (326 aa). The active-site Charge relay system is aspartate 173. The interval 197 to 221 is disordered; that stretch reads PNARDGDQRDNNPADEGDWFDNWDC. Intrachain disulfides connect cysteine 221–cysteine 273 and cysteine 315–cysteine 352. The active-site Charge relay system is the histidine 237. The active-site Charge relay system is serine 409. Positions 477–603 are excised as a propeptide; sequence RAQPRPPVNQ…GSIDSWSLTF (127 aa). The P/Homo B domain maps to 478–603; the sequence is AQPRPPVNQP…GSIDSWSLTF (126 aa).

It belongs to the peptidase S8 family.

It is found in the secreted. This Dichelobacter nodosus (Bacteroides nodosus) protein is Extracellular basic protease (bprV).